A 244-amino-acid chain; its full sequence is NAD(P)H-quinone oxidoreductase subunit K (244 aa).

Residues C60, C61, C125, and C156 each coordinate [4Fe-4S] cluster.

The protein belongs to the complex I 20 kDa subunit family. In terms of assembly, NDH-1 can be composed of about 15 different subunits; different subcomplexes with different compositions have been identified which probably have different functions. Requires [4Fe-4S] cluster as cofactor.

Its subcellular location is the cellular thylakoid membrane. The catalysed reaction is a plastoquinone + NADH + (n+1) H(+)(in) = a plastoquinol + NAD(+) + n H(+)(out). The enzyme catalyses a plastoquinone + NADPH + (n+1) H(+)(in) = a plastoquinol + NADP(+) + n H(+)(out). In terms of biological role, NDH-1 shuttles electrons from an unknown electron donor, via FMN and iron-sulfur (Fe-S) centers, to quinones in the respiratory and/or the photosynthetic chain. The immediate electron acceptor for the enzyme in this species is believed to be plastoquinone. Couples the redox reaction to proton translocation, and thus conserves the redox energy in a proton gradient. Cyanobacterial NDH-1 also plays a role in inorganic carbon-concentration. In Synechococcus sp. (strain CC9902), this protein is NAD(P)H-quinone oxidoreductase subunit K.